The chain runs to 660 residues: Acetyl-coenzyme A synthetase (660 aa).

CoA contacts are provided by residues 197–200 and threonine 317; that span reads RGGK. ATP-binding positions include 397–399, 421–426, aspartate 512, and arginine 528; these read GEP and DTWWQT. Residue serine 536 coordinates CoA. Arginine 539 is an ATP binding site. 3 residues coordinate Mg(2+): valine 550, histidine 552, and valine 555. The residue at position 625 (lysine 625) is an N6-acetyllysine.

It belongs to the ATP-dependent AMP-binding enzyme family. The cofactor is Mg(2+). Acetylated. Deacetylation by the SIR2-homolog deacetylase activates the enzyme.

The enzyme catalyses acetate + ATP + CoA = acetyl-CoA + AMP + diphosphate. Its function is as follows. Catalyzes the conversion of acetate into acetyl-CoA (AcCoA), an essential intermediate at the junction of anabolic and catabolic pathways. AcsA undergoes a two-step reaction. In the first half reaction, AcsA combines acetate with ATP to form acetyl-adenylate (AcAMP) intermediate. In the second half reaction, it can then transfer the acetyl group from AcAMP to the sulfhydryl group of CoA, forming the product AcCoA. The chain is Acetyl-coenzyme A synthetase from Burkholderia lata (strain ATCC 17760 / DSM 23089 / LMG 22485 / NCIMB 9086 / R18194 / 383).